The following is a 150-amino-acid chain: UPF0039 protein C11D3.02c (150 aa).

An N-acetyltransferase domain is found at 9-150 (KYFNSLDVKE…IPHVEMRLEL (142 aa)).

This sequence belongs to the UPF0039 (ElaA) family.

The polypeptide is UPF0039 protein C11D3.02c (Schizosaccharomyces pombe (strain 972 / ATCC 24843) (Fission yeast)).